A 199-amino-acid polypeptide reads, in one-letter code: Recombination protein RecR (199 aa).

A C4-type zinc finger spans residues 57-72 (CSICGNITEDDPCVIC). Residues 80–176 (STVLVVEEAK…KVTRLAHGLS (97 aa)) enclose the Toprim domain.

The protein belongs to the RecR family.

Functionally, may play a role in DNA repair. It seems to be involved in an RecBC-independent recombinational process of DNA repair. It may act with RecF and RecO. The chain is Recombination protein RecR from Lactiplantibacillus plantarum (strain ATCC BAA-793 / NCIMB 8826 / WCFS1) (Lactobacillus plantarum).